The primary structure comprises 104 residues: Putative pterin-4-alpha-carbinolamine dehydratase (104 aa).

This sequence belongs to the pterin-4-alpha-carbinolamine dehydratase family.

The enzyme catalyses (4aS,6R)-4a-hydroxy-L-erythro-5,6,7,8-tetrahydrobiopterin = (6R)-L-erythro-6,7-dihydrobiopterin + H2O. This Rhizobium meliloti (strain 1021) (Ensifer meliloti) protein is Putative pterin-4-alpha-carbinolamine dehydratase (pcbD).